A 452-amino-acid chain; its full sequence is Phosphoglucosamine mutase (452 aa).

The Phosphoserine intermediate role is filled by Ser-104. Residues Ser-104, Asp-244, Asp-246, and Asp-248 each coordinate Mg(2+). Ser-104 is subject to Phosphoserine.

The protein belongs to the phosphohexose mutase family. The cofactor is Mg(2+). Activated by phosphorylation.

The catalysed reaction is alpha-D-glucosamine 1-phosphate = D-glucosamine 6-phosphate. Its function is as follows. Catalyzes the conversion of glucosamine-6-phosphate to glucosamine-1-phosphate. The chain is Phosphoglucosamine mutase from Pediococcus pentosaceus (strain ATCC 25745 / CCUG 21536 / LMG 10740 / 183-1w).